The sequence spans 188 residues: Probable DNA-directed RNA polymerase subunit delta (188 aa).

The 68-residue stretch at 14–81 folds into the HTH HARE-type domain; it reads LSMIEVAHAL…GNNVWALRSW (68 aa). Residues 96 to 188 form a disordered region; sequence EIEDEEEEEK…EDDSDDTDED (93 aa). 2 stretches are compositionally biased toward acidic residues: residues 118 to 150 and 158 to 188; these read IEDE…EDKD and ELAE…TDED.

It belongs to the RpoE family. In terms of assembly, RNAP is composed of a core of 2 alpha, a beta and a beta' subunits. The core is associated with a delta subunit and one of several sigma factors.

Its function is as follows. Participates in both the initiation and recycling phases of transcription. In the presence of the delta subunit, RNAP displays an increased specificity of transcription, a decreased affinity for nucleic acids, and an increased efficiency of RNA synthesis because of enhanced recycling. The sequence is that of Probable DNA-directed RNA polymerase subunit delta from Lactococcus lactis subsp. cremoris (strain MG1363).